The chain runs to 174 residues: Adenylate kinase (174 aa).

The tract at residues 12 to 41 (STGDMLRAAIKAGTPLGLEAKKIIDEGGLV) is NMP. AMP contacts are provided by residues T13, R18, 39–41 (GLV), 67–70 (GFPR), and Q74. The segment at 104-141 (GRRVHLASGRTYHIAYNPPKVEGKDDVTGEDLIQRDDD) is LID. Residues R105 and 114 to 115 (TY) each bind ATP. Residues R138 and R149 each coordinate AMP.

The protein belongs to the adenylate kinase family. As to quaternary structure, monomer.

The protein resides in the cytoplasm. It carries out the reaction AMP + ATP = 2 ADP. Its pathway is purine metabolism; AMP biosynthesis via salvage pathway; AMP from ADP: step 1/1. Its function is as follows. Catalyzes the reversible transfer of the terminal phosphate group between ATP and AMP. Plays an important role in cellular energy homeostasis and in adenine nucleotide metabolism. The protein is Adenylate kinase of Neisseria animalis.